The chain runs to 143 residues: Large ribosomal subunit protein uL11 (143 aa).

It belongs to the universal ribosomal protein uL11 family. As to quaternary structure, part of the ribosomal stalk of the 50S ribosomal subunit. Interacts with L10 and the large rRNA to form the base of the stalk. L10 forms an elongated spine to which L12 dimers bind in a sequential fashion forming a multimeric L10(L12)X complex. In terms of processing, one or more lysine residues are methylated.

Forms part of the ribosomal stalk which helps the ribosome interact with GTP-bound translation factors. This chain is Large ribosomal subunit protein uL11, found in Allorhizobium ampelinum (strain ATCC BAA-846 / DSM 112012 / S4) (Agrobacterium vitis (strain S4)).